Reading from the N-terminus, the 274-residue chain is 2,3,4,5-tetrahydropyridine-2,6-dicarboxylate N-succinyltransferase (274 aa).

Belongs to the transferase hexapeptide repeat family.

The protein localises to the cytoplasm. It carries out the reaction (S)-2,3,4,5-tetrahydrodipicolinate + succinyl-CoA + H2O = (S)-2-succinylamino-6-oxoheptanedioate + CoA. The protein operates within amino-acid biosynthesis; L-lysine biosynthesis via DAP pathway; LL-2,6-diaminopimelate from (S)-tetrahydrodipicolinate (succinylase route): step 1/3. The polypeptide is 2,3,4,5-tetrahydropyridine-2,6-dicarboxylate N-succinyltransferase (Escherichia coli (strain SMS-3-5 / SECEC)).